A 138-amino-acid polypeptide reads, in one-letter code: Diuretic hormone 1 (138 aa).

An N-terminal signal peptide occupies residues 1–19 (MMWWAIWCVMVVVSSAASA). Residues 20 to 78 (APAPDSAPMDLVQIDSAGPDDESLGYAVSSLEGRYGAEAPWLYLLAEMPRDSQIGRAAV) constitute a propeptide that is removed on maturation. The residue at position 121 (isoleucine 121) is an Isoleucine amide. A propeptide spanning residues 125–138 (GLQWSRSEQPSAYY) is cleaved from the precursor.

The protein belongs to the sauvagine/corticotropin-releasing factor/urotensin I family.

The protein resides in the secreted. In terms of biological role, regulation of fluid secretion. This chain is Diuretic hormone 1, found in Manduca sexta (Tobacco hawkmoth).